A 526-amino-acid chain; its full sequence is 3',5'-cyclic-nucleotide phosphodiesterase 2 (526 aa).

The 345-residue stretch at 182–526 (RNIEFMSFLS…EYWMKHKKPQ (345 aa)) folds into the PDEase domain. The Proton donor role is filled by H265. The a divalent metal cation site is built by H269, H302, D303, and D400.

The protein belongs to the cyclic nucleotide phosphodiesterase family. Monomer. A divalent metal cation serves as cofactor.

It carries out the reaction 3',5'-cyclic AMP + H2O = AMP + H(+). Functionally, controls the level of cAMP in yeast cells, together with the low-affinity cAMP phosphodiesterase (PDE1). This Saccharomyces cerevisiae (strain ATCC 204508 / S288c) (Baker's yeast) protein is 3',5'-cyclic-nucleotide phosphodiesterase 2.